The following is a 357-amino-acid chain: Phosphoribosylformylglycinamidine cyclo-ligase (357 aa).

It belongs to the AIR synthase family.

The protein resides in the cytoplasm. It catalyses the reaction 2-formamido-N(1)-(5-O-phospho-beta-D-ribosyl)acetamidine + ATP = 5-amino-1-(5-phospho-beta-D-ribosyl)imidazole + ADP + phosphate + H(+). Its pathway is purine metabolism; IMP biosynthesis via de novo pathway; 5-amino-1-(5-phospho-D-ribosyl)imidazole from N(2)-formyl-N(1)-(5-phospho-D-ribosyl)glycinamide: step 2/2. The sequence is that of Phosphoribosylformylglycinamidine cyclo-ligase from Rhizobium etli (strain CIAT 652).